Reading from the N-terminus, the 520-residue chain is Target of rapamycin complex 2 subunit MAPKAP1 (520 aa).

The CRIM domain occupies 139–267 (QSILSVRLEQ…GFSTLALVEK (129 aa)). Residues 279–353 (LFVRINAAHG…QNSLEFCLVR (75 aa)) are SIN1-type RBD. A disordered region spans residues 310–333 (KRRKGSQRNSGPQYRLEKQSQPNV). An SIN1-type PH domain is found at 382–487 (QYKSFKVSMI…IVLKVNYILE (106 aa)). Residues Arg-393, Lys-428, and Lys-464 each coordinate a 1,2-diacyl-sn-glycero-3-phospho-(1D-myo-inositol-3,4,5-trisphosphate).

This sequence belongs to the SIN1 family. Component of the mechanistic target of rapamycin complex 2 (mTORC2), consisting in two heterotretramers composed of MTOR, MLST8, RICTOR and MAPKAP1/SIN1. Contrary to mTORC1, mTORC2 does not bind to and is not sensitive to FKBP12-rapamycin.

The protein localises to the cell membrane. Its subcellular location is the endoplasmic reticulum membrane. It localises to the early endosome membrane. The protein resides in the late endosome membrane. It is found in the lysosome membrane. The protein localises to the golgi apparatus membrane. Its subcellular location is the mitochondrion outer membrane. It localises to the cytoplasm. The protein resides in the perinuclear region. It is found in the nucleus. Its activity is regulated as follows. Phosphatidylinositol 3,4,5-trisphosphate (PI(3,4,5)P3) promotes MTOR activation by relieving MAPKAP1/SIN1-mediated inhibition of MTOR that takes place in absence of PI(3,4,5)P3. In terms of biological role, component of the mechanistic target of rapamycin complex 2 (mTORC2), which transduces signals from growth factors to pathways involved in proliferation, cytoskeletal organization, lipogenesis and anabolic output. In response to growth factors, mTORC2 phosphorylates and activates AGC protein kinase family members, including AKT (AKT1, AKT2 and AKT3), PKC (PRKCA, PRKCB and PRKCE) and SGK1. In contrast to mTORC1, mTORC2 is nutrient-insensitive. Within the mTORC2 complex, MAPKAP1/SIN1 acts as a substrate adapter which recognizes and binds AGC protein kinase family members for phosphorylation by MTOR. This Xenopus tropicalis (Western clawed frog) protein is Target of rapamycin complex 2 subunit MAPKAP1 (mapkap1).